A 243-amino-acid polypeptide reads, in one-letter code: Ubiquinone/menaquinone biosynthesis C-methyltransferase UbiE (243 aa).

Residues T69, D90, and D116–A117 contribute to the S-adenosyl-L-methionine site.

It belongs to the class I-like SAM-binding methyltransferase superfamily. MenG/UbiE family.

It catalyses the reaction a 2-demethylmenaquinol + S-adenosyl-L-methionine = a menaquinol + S-adenosyl-L-homocysteine + H(+). It carries out the reaction a 2-methoxy-6-(all-trans-polyprenyl)benzene-1,4-diol + S-adenosyl-L-methionine = a 5-methoxy-2-methyl-3-(all-trans-polyprenyl)benzene-1,4-diol + S-adenosyl-L-homocysteine + H(+). The protein operates within quinol/quinone metabolism; menaquinone biosynthesis; menaquinol from 1,4-dihydroxy-2-naphthoate: step 2/2. It functions in the pathway cofactor biosynthesis; ubiquinone biosynthesis. Its function is as follows. Methyltransferase required for the conversion of demethylmenaquinol (DMKH2) to menaquinol (MKH2) and the conversion of 2-polyprenyl-6-methoxy-1,4-benzoquinol (DDMQH2) to 2-polyprenyl-3-methyl-6-methoxy-1,4-benzoquinol (DMQH2). The protein is Ubiquinone/menaquinone biosynthesis C-methyltransferase UbiE of Burkholderia ambifaria (strain MC40-6).